A 542-amino-acid chain; its full sequence is Thermosome subunit alpha (542 aa).

It belongs to the TCP-1 chaperonin family. In terms of assembly, forms a Heterooligomeric complex of two stacked eight-membered rings.

In terms of biological role, molecular chaperone; binds unfolded polypeptides in vitro, and has a weak ATPase activity. This chain is Thermosome subunit alpha (thsA), found in Methanothermobacter thermautotrophicus (strain ATCC 29096 / DSM 1053 / JCM 10044 / NBRC 100330 / Delta H) (Methanobacterium thermoautotrophicum).